We begin with the raw amino-acid sequence, 242 residues long: Ferritin, mitochondrial (242 aa).

The N-terminal 49 residues, 1-49 (MLSCFRLLSRHISPSLASLRPVRCCFALPLRWAPGRPLDPRQIAPRRPL), are a transit peptide targeting the mitochondrion. The segment covering 47–58 (RPLAAAASSRDP) has biased composition (low complexity). Residues 47–71 (RPLAAAASSRDPTGPAAGPSRVRQN) form a disordered region. Residues 70–219 (QNFHPDSEAA…DHVHNLVKMG (150 aa)) enclose the Ferritin-like diiron domain. Fe cation is bound by residues Glu-87, Glu-122, His-125, Glu-167, and Gln-201.

Belongs to the ferritin family. As to quaternary structure, homooligomer of 24 subunits. The functional molecule is roughly spherical and contains a central cavity into which the polymeric mineral iron core is deposited. In terms of tissue distribution, detected in testis and erythroleukemia. Expression is very low or not detectable in brain, colon, heart, kidney, liver, lung, muscle, placental, spleen and small intestine.

The protein localises to the mitochondrion. It catalyses the reaction 4 Fe(2+) + O2 + 4 H(+) = 4 Fe(3+) + 2 H2O. Its function is as follows. Catalyzes the oxidation of ferrous iron(II) to ferric iron(III) and stores iron in a soluble, non-toxic, readily available form. Important for iron homeostasis. Iron is taken up in the ferrous form and deposited as ferric hydroxides after oxidation. The polypeptide is Ferritin, mitochondrial (Homo sapiens (Human)).